Reading from the N-terminus, the 44-residue chain is MADKPDFGEVASFDKSKLKKTDTEVKNTLPTKETIDQEKKAESS.

This sequence belongs to the thymosin beta family.

Its subcellular location is the cytoplasm. The protein resides in the cytoskeleton. Functionally, plays an important role in the organization of the cytoskeleton. Binds to and sequesters actin monomers (G actin) and therefore inhibits actin polymerization. The protein is Thymosin beta-10 of Torpedo marmorata (Marbled electric ray).